The following is a 618-amino-acid chain: Chaperone protein HtpG (618 aa).

The interval 1–340 is a; substrate-binding; it reads MATKHQFQTE…SEDLPLNVSR (340 aa). The segment at 341–545 is b; sequence EILQQNKILA…KEDNNPMMAN (205 aa). Residues 546–618 form a c region; that stretch reads LMAQMGQKVP…ELNSLLLQSL (73 aa).

The protein belongs to the heat shock protein 90 family. Homodimer.

It localises to the cytoplasm. Functionally, molecular chaperone. Has ATPase activity. The sequence is that of Chaperone protein HtpG from Helicobacter hepaticus (strain ATCC 51449 / 3B1).